We begin with the raw amino-acid sequence, 161 residues long: Nucleotide-binding protein Bcenmc03_2579 (161 aa).

It belongs to the YajQ family.

In terms of biological role, nucleotide-binding protein. This is Nucleotide-binding protein Bcenmc03_2579 from Burkholderia orbicola (strain MC0-3).